The chain runs to 259 residues: Thiazole synthase (259 aa).

Catalysis depends on K95, which acts as the Schiff-base intermediate with DXP. 1-deoxy-D-xylulose 5-phosphate is bound by residues G156, 182–183, and 204–205; these read AG and NT.

Belongs to the ThiG family. In terms of assembly, homotetramer. Forms heterodimers with either ThiH or ThiS.

The protein localises to the cytoplasm. The catalysed reaction is [ThiS sulfur-carrier protein]-C-terminal-Gly-aminoethanethioate + 2-iminoacetate + 1-deoxy-D-xylulose 5-phosphate = [ThiS sulfur-carrier protein]-C-terminal Gly-Gly + 2-[(2R,5Z)-2-carboxy-4-methylthiazol-5(2H)-ylidene]ethyl phosphate + 2 H2O + H(+). Its pathway is cofactor biosynthesis; thiamine diphosphate biosynthesis. Functionally, catalyzes the rearrangement of 1-deoxy-D-xylulose 5-phosphate (DXP) to produce the thiazole phosphate moiety of thiamine. Sulfur is provided by the thiocarboxylate moiety of the carrier protein ThiS. In vitro, sulfur can be provided by H(2)S. The sequence is that of Thiazole synthase from Baumannia cicadellinicola subsp. Homalodisca coagulata.